We begin with the raw amino-acid sequence, 199 residues long: Interleukin-11 (199 aa).

Positions 1-21 are cleaved as a signal peptide; it reads MNCVCRLVLVVLSLWPDRVVA. Positions 182–190 are important for interaction with IL11RA and for the stimulation of cell proliferation; the sequence is HLTLDWAVR.

It belongs to the IL-6 superfamily. In terms of assembly, interacts with IL11RA to associate with IL6ST, giving rise to a multimeric signaling complex.

The protein localises to the secreted. Functionally, cytokine that stimulates the proliferation of hematopoietic stem cells and megakaryocyte progenitor cells and induces megakaryocyte maturation resulting in increased platelet production. Also promotes the proliferation of hepatocytes in response to liver damage. Binding to its receptor formed by IL6ST and IL11RA activates a signaling cascade that promotes cell proliferation. Signaling leads to the activation of intracellular protein kinases and the phosphorylation of STAT3. The interaction with the membrane-bound IL11RA and IL6ST stimulates 'classic signaling', whereas the binding of IL11 and soluble IL11RA to IL6ST stimulates 'trans-signaling'. The polypeptide is Interleukin-11 (Rattus norvegicus (Rat)).